The chain runs to 524 residues: Apoptosis inhibitor 5 (524 aa).

An ARM-like and Heat-like helical repeats region spans residues 2–360; the sequence is PTVEELYRNY…HQLGRKLPDF (359 aa). Residue lysine 251 is modified to N6-acetyllysine. The interval 370-391 is leucine-zipper; the sequence is LKDFKIRLQYFARGLQVYIRQL. The residue at position 399 (threonine 399) is a Phosphothreonine. The interval 452 to 524 is disordered; it reads GQKRASEDTT…RGNRSRGRLY (73 aa). The Nuclear localization signal signature appears at 454-475; it reads KRASEDTTSGSPPKKSSAGPKR. Serine 462, serine 464, and serine 469 each carry phosphoserine. Low complexity predominate over residues 462-472; that stretch reads SGSPPKKSSAG. The segment covering 487-497 has biased composition (polar residues); sequence KYSSNLGNFNY. Omega-N-methylarginine is present on arginine 500.

This sequence belongs to the API5 family. Monomer. Interacts with FGF2 and ACIN1. In terms of processing, acetylation at Lys-251 impairs antiapoptotic function. In terms of tissue distribution, expressed in all tissues tested, including heart, brain, placenta, lung, liver, skeletal muscle, kidney and pancreas. Highest levels in heart, pancreas and placenta. Highly expressed in several cancers. Preferentially expressed in squamous cell carcinoma versus adenocarcinoma in non-small cell lung cancer.

It is found in the nucleus. It localises to the cytoplasm. Antiapoptotic factor that may have a role in protein assembly. Negatively regulates ACIN1. By binding to ACIN1, it suppresses ACIN1 cleavage from CASP3 and ACIN1-mediated DNA fragmentation. Also known to efficiently suppress E2F1-induced apoptosis. Its depletion enhances the cytotoxic action of the chemotherapeutic drugs. This Homo sapiens (Human) protein is Apoptosis inhibitor 5.